A 340-amino-acid chain; its full sequence is Selenide, water dikinase (340 aa).

The active site involves Cys13. ATP contacts are provided by residues Lys16 and 43–45 (ASD). Asp46 provides a ligand contact to Mg(2+). Residues Asp63, Asp86, and 133–135 (GHS) contribute to the ATP site. Position 86 (Asp86) interacts with Mg(2+). Asp221 contacts Mg(2+).

It belongs to the selenophosphate synthase 1 family. Class I subfamily. Homodimer. The cofactor is Mg(2+).

The enzyme catalyses hydrogenselenide + ATP + H2O = selenophosphate + AMP + phosphate + 2 H(+). Its function is as follows. Synthesizes selenophosphate from selenide and ATP. The protein is Selenide, water dikinase of Desulfitobacterium hafniense (strain Y51).